The chain runs to 199 residues: Small ribosomal subunit protein uS4 (199 aa).

Positions 91–154 constitute an S4 RNA-binding domain; that stretch reads SRLDNLVYRM…RGLQLIKDAL (64 aa).

The protein belongs to the universal ribosomal protein uS4 family. As to quaternary structure, part of the 30S ribosomal subunit. Contacts protein S5. The interaction surface between S4 and S5 is involved in control of translational fidelity.

In terms of biological role, one of the primary rRNA binding proteins, it binds directly to 16S rRNA where it nucleates assembly of the body of the 30S subunit. Its function is as follows. With S5 and S12 plays an important role in translational accuracy. This Brevibacillus brevis (strain 47 / JCM 6285 / NBRC 100599) protein is Small ribosomal subunit protein uS4.